Consider the following 90-residue polypeptide: Auxin-responsive protein SAUR19 (90 aa).

The protein belongs to the ARG7 family. As to quaternary structure, interacts with and inhibits PP2C-D subfamily of type 2C phosphatases such as PP2C67/PP2C-D1, PP2C64/PP2C-D5 and PP2C46/PP2C-D6.

Its subcellular location is the cell membrane. Functionally, provide a mechanistic link between auxin and plasma membrane H(+)-ATPases (PM H(+)-ATPases, e.g. AHA1 and AHA2), and triggers PM H(+)-ATPases activity by promoting phosphorylation of their C-terminal autoinhibitory domain as a result of PP2C-D subfamily of type 2C phosphatases inhibition, thus leading to the acidification of the apoplast and the facilitation of solutes and water uptake to drive cell expansion. Prevents the apical hook maintenance of etiolated seedlings. Functions as positive effectors of cell expansion through modulation of auxin transport. The chain is Auxin-responsive protein SAUR19 from Arabidopsis thaliana (Mouse-ear cress).